Consider the following 387-residue polypeptide: MAAFASGLAIIFNSPSLNPVTTQATFLSSNRIRSSPRVFSGFHSLRRRGFRRFSQNVIPDRFNSFSCNCLSAVSTSTIDYEFTDGGKEVELRLRLKTGEILSPKDISVDADGTSLAVKEKRNGLLITLLETNHLFEKIMPSETIWYIDEDQLVVNMKKVDGELKWPDIVESWESLTAGMMQLLKGASIYIVGDSTEINQKVSRELAVGLGYSPLDSKELLESFSKQTIDSWILAEGPDSVAEAESSVLESLSSHVRTVVSTLGGKHGAAGRADQWRHLYSGFTVWVSQTEATDEESAKEEARRSKQEREIGYSNADVVVKLQGWDPTHAKSVAQASLSALKQLIISDKGLPGKKSLYIRLGCRGDWPNIKPPGWDPSSDTGPHPQFT.

The N-terminal 71 residues, 1 to 71 (MAAFASGLAI…FNSFSCNCLS (71 aa)), are a transit peptide targeting the chloroplast. The interval 368-387 (NIKPPGWDPSSDTGPHPQFT) is disordered.

The protein belongs to the shikimate kinase family.

It is found in the plastid. Its subcellular location is the chloroplast. The protein is Probable inactive shikimate kinase like 2, chloroplastic (SKL2) of Arabidopsis thaliana (Mouse-ear cress).